The sequence spans 183 residues: Ribulose bisphosphate carboxylase small subunit, chloroplastic 7 (183 aa).

Residues 1–43 constitute a chloroplast transit peptide; that stretch reads MAAAMMNKTVVVGKESVKGGVAPKVAMSRGGFLNSGIMKKDRD.

Belongs to the RuBisCO small chain family. As to quaternary structure, heterohexadecamer of 8 large and 8 small subunits.

It localises to the plastid. It is found in the chloroplast. Its function is as follows. RuBisCO catalyzes two reactions: the carboxylation of D-ribulose 1,5-bisphosphate, the primary event in carbon dioxide fixation, as well as the oxidative fragmentation of the pentose substrate. Both reactions occur simultaneously and in competition at the same active site. Although the small subunit is not catalytic it is essential for maximal activity. This Acetabularia peniculus (Green alga) protein is Ribulose bisphosphate carboxylase small subunit, chloroplastic 7.